A 711-amino-acid polypeptide reads, in one-letter code: Polyribonucleotide nucleotidyltransferase (711 aa).

Residues D487 and D493 each contribute to the Mg(2+) site. The KH domain maps to 554–613 (PRIHTMKISAEKIKDVIGKGGAVIRALTEETGTTIEIEDDGTIKIAATEGAAAKEAIRRI). Residues 623-691 (GRIYTGKVAR…RQGRVRLSMK (69 aa)) enclose the S1 motif domain. The disordered stretch occupies residues 691 to 711 (KEAVEKPAEEAAAEAPAAKEE).

Belongs to the polyribonucleotide nucleotidyltransferase family. In terms of assembly, component of the RNA degradosome, which is a multiprotein complex involved in RNA processing and mRNA degradation. It depends on Mg(2+) as a cofactor.

It localises to the cytoplasm. It carries out the reaction RNA(n+1) + phosphate = RNA(n) + a ribonucleoside 5'-diphosphate. Its function is as follows. Involved in mRNA degradation. Catalyzes the phosphorolysis of single-stranded polyribonucleotides processively in the 3'- to 5'-direction. In Vibrio parahaemolyticus serotype O3:K6 (strain RIMD 2210633), this protein is Polyribonucleotide nucleotidyltransferase.